The following is a 417-amino-acid chain: NADH-quinone oxidoreductase subunit D (417 aa).

Belongs to the complex I 49 kDa subunit family. In terms of assembly, NDH-1 is composed of 14 different subunits. Subunits NuoB, C, D, E, F, and G constitute the peripheral sector of the complex.

It is found in the cell inner membrane. It carries out the reaction a quinone + NADH + 5 H(+)(in) = a quinol + NAD(+) + 4 H(+)(out). NDH-1 shuttles electrons from NADH, via FMN and iron-sulfur (Fe-S) centers, to quinones in the respiratory chain. The immediate electron acceptor for the enzyme in this species is believed to be ubiquinone. Couples the redox reaction to proton translocation (for every two electrons transferred, four hydrogen ions are translocated across the cytoplasmic membrane), and thus conserves the redox energy in a proton gradient. This Polaromonas naphthalenivorans (strain CJ2) protein is NADH-quinone oxidoreductase subunit D.